Consider the following 390-residue polypeptide: Queuine tRNA-ribosyltransferase (390 aa).

Aspartate 92 acts as the Proton acceptor in catalysis. Substrate-binding positions include 92–96, aspartate 146, glutamine 195, and glycine 222; that span reads DSGGF. The tract at residues 253-259 is RNA binding; that stretch reads GVGTPED. Aspartate 272 acts as the Nucleophile in catalysis. Residues 277 to 281 are RNA binding; important for wobble base 34 recognition; the sequence is TRNAR. Zn(2+) contacts are provided by cysteine 310, cysteine 312, cysteine 315, and histidine 354.

Belongs to the queuine tRNA-ribosyltransferase family. Homodimer. Within each dimer, one monomer is responsible for RNA recognition and catalysis, while the other monomer binds to the replacement base PreQ1. The cofactor is Zn(2+).

It catalyses the reaction 7-aminomethyl-7-carbaguanine + guanosine(34) in tRNA = 7-aminomethyl-7-carbaguanosine(34) in tRNA + guanine. The protein operates within tRNA modification; tRNA-queuosine biosynthesis. In terms of biological role, catalyzes the base-exchange of a guanine (G) residue with the queuine precursor 7-aminomethyl-7-deazaguanine (PreQ1) at position 34 (anticodon wobble position) in tRNAs with GU(N) anticodons (tRNA-Asp, -Asn, -His and -Tyr). Catalysis occurs through a double-displacement mechanism. The nucleophile active site attacks the C1' of nucleotide 34 to detach the guanine base from the RNA, forming a covalent enzyme-RNA intermediate. The proton acceptor active site deprotonates the incoming PreQ1, allowing a nucleophilic attack on the C1' of the ribose to form the product. After dissociation, two additional enzymatic reactions on the tRNA convert PreQ1 to queuine (Q), resulting in the hypermodified nucleoside queuosine (7-(((4,5-cis-dihydroxy-2-cyclopenten-1-yl)amino)methyl)-7-deazaguanosine). This is Queuine tRNA-ribosyltransferase from Verminephrobacter eiseniae (strain EF01-2).